Here is a 429-residue protein sequence, read N- to C-terminus: Autophagy-related protein 18 (429 aa).

WD repeat units lie at residues 1 to 36 (MTMNFVTFNQDYSYLAVATSKGFRIFTTDPFAKSYE), 69 to 114 (KRQS…LLYT), 139 to 182 (PLPQ…AINV), 185 to 225 (AHRS…KLYQ), 230 to 269 (SIPSRIFSMSFNTTSTLLCVSSSTETIHLFKLSQPSQLQE), 309 to 355 (KHNG…AWIK), and 367 to 407 (ANTG…GGEG). Residues 226-230 (FRRGS) carry the L/FRRG motif motif. The segment at 267–309 (LQETSSANTSSTGRRRSLSSLSQSPEREATEEDNGSSDLASRK) is disordered.

It belongs to the WD repeat PROPPIN family. In terms of assembly, component of the PI(3,5)P2 regulatory complex.

The protein localises to the preautophagosomal structure membrane. The protein resides in the vacuole membrane. It is found in the endosome membrane. Functionally, the PI(3,5)P2 regulatory complex regulates both the synthesis and turnover of phosphatidylinositol 3,5-bisphosphate (PtdIns(3,5)P2). Necessary for proper vacuole morphology. Plays an important role in osmotically-induced vacuole fragmentation. Required for cytoplasm to vacuole transport (Cvt) vesicle formation, pexophagy and starvation-induced autophagy. Involved in correct ATG9 trafficking to the pre-autophagosomal structure. Might also be involved in premeiotic DNA replication. The polypeptide is Autophagy-related protein 18 (atg18) (Emericella nidulans (strain FGSC A4 / ATCC 38163 / CBS 112.46 / NRRL 194 / M139) (Aspergillus nidulans)).